Reading from the N-terminus, the 122-residue chain is Small ribosomal subunit protein uS13 (122 aa).

The segment at 95–122 is disordered; the sequence is GLPVRGQRTHTNARTRKGPAKPIAGKKK.

It belongs to the universal ribosomal protein uS13 family. Part of the 30S ribosomal subunit. Forms a loose heterodimer with protein S19. Forms two bridges to the 50S subunit in the 70S ribosome.

In terms of biological role, located at the top of the head of the 30S subunit, it contacts several helices of the 16S rRNA. In the 70S ribosome it contacts the 23S rRNA (bridge B1a) and protein L5 of the 50S subunit (bridge B1b), connecting the 2 subunits; these bridges are implicated in subunit movement. Contacts the tRNAs in the A and P-sites. In Caulobacter sp. (strain K31), this protein is Small ribosomal subunit protein uS13.